A 157-amino-acid chain; its full sequence is MGKFALNLNAELTGVKNLAPKDEESFYYAFKVQCSGCREIHDNAIEISRSETHSIPGSKGEANLIWTCKNCRKTCSFVIEGPFSPYNDSQETKKVLVLECRGCELVEFIPQGEWIANGAESNTLFDEIVLEDDWYDYDENASSEVSITNLEWSISKA.

Residues Cys-34, Cys-37, Cys-68, and Cys-71 each contribute to the Zn(2+) site.

Belongs to the UPF0587 family.

The chain is UPF0587 protein C2D10.03c from Schizosaccharomyces pombe (strain 972 / ATCC 24843) (Fission yeast).